Reading from the N-terminus, the 269-residue chain is Tryptophan synthase alpha chain (269 aa).

Catalysis depends on proton acceptor residues glutamate 49 and aspartate 60.

It belongs to the TrpA family. Tetramer of two alpha and two beta chains.

It carries out the reaction (1S,2R)-1-C-(indol-3-yl)glycerol 3-phosphate + L-serine = D-glyceraldehyde 3-phosphate + L-tryptophan + H2O. Its pathway is amino-acid biosynthesis; L-tryptophan biosynthesis; L-tryptophan from chorismate: step 5/5. Functionally, the alpha subunit is responsible for the aldol cleavage of indoleglycerol phosphate to indole and glyceraldehyde 3-phosphate. The protein is Tryptophan synthase alpha chain of Ectopseudomonas mendocina (strain ymp) (Pseudomonas mendocina).